The chain runs to 129 residues: uncharacterized protein (129 aa).

A helical transmembrane segment spans residues 77 to 97 (ILAVFIISFIIVVVGVLLLGL). The interval 109–129 (SSNDKKLQSNDEEKQALAEKA) is disordered. The segment covering 111–129 (NDKKLQSNDEEKQALAEKA) has biased composition (basic and acidic residues).

It is found in the vacuole membrane. This is an uncharacterized protein from Saccharomyces cerevisiae (strain ATCC 204508 / S288c) (Baker's yeast).